The sequence spans 382 residues: Alkanesulfonate monooxygenase (382 aa).

Belongs to the SsuD family. In terms of assembly, homotetramer.

The catalysed reaction is an alkanesulfonate + FMNH2 + O2 = an aldehyde + FMN + sulfite + H2O + 2 H(+). Its function is as follows. Catalyzes the desulfonation of aliphatic sulfonates. This is Alkanesulfonate monooxygenase from Yersinia pseudotuberculosis serotype O:1b (strain IP 31758).